The chain runs to 595 residues: DNA primase (595 aa).

The CHC2-type zinc finger occupies 38 to 62; the sequence is CPFHDEKTPSFIVYPTRGHYHCYGC. Residues 251–331 enclose the Toprim domain; the sequence is RRVILVEGQA…GITAIVCRLP (81 aa). Residues E257, D302, and D304 each contribute to the Mg(2+) site. The span at 430–441 shows a compositional bias: basic and acidic residues; it reads KGKKVSAKEPSS. Residues 430 to 451 are disordered; the sequence is KGKKVSAKEPSSESKQTSTEGK.

This sequence belongs to the DnaG primase family. In terms of assembly, monomer. Interacts with DnaB. Zn(2+) serves as cofactor. The cofactor is Mg(2+).

The enzyme catalyses ssDNA + n NTP = ssDNA/pppN(pN)n-1 hybrid + (n-1) diphosphate.. Functionally, RNA polymerase that catalyzes the synthesis of short RNA molecules used as primers for DNA polymerase during DNA replication. This is DNA primase from Chlamydia trachomatis serovar D (strain ATCC VR-885 / DSM 19411 / UW-3/Cx).